A 99-amino-acid polypeptide reads, in one-letter code: Nucleoid-associated protein SpyM3_1606 (99 aa).

This sequence belongs to the YbaB/EbfC family. Homodimer.

The protein resides in the cytoplasm. It is found in the nucleoid. Functionally, binds to DNA and alters its conformation. May be involved in regulation of gene expression, nucleoid organization and DNA protection. This Streptococcus pyogenes serotype M3 (strain ATCC BAA-595 / MGAS315) protein is Nucleoid-associated protein SpyM3_1606.